The chain runs to 387 residues: 1-deoxy-D-xylulose 5-phosphate reductoisomerase (387 aa).

NADPH is bound by residues threonine 11, glycine 12, serine 13, isoleucine 14, glycine 37, arginine 38, glutamine 39, and asparagine 127. Lysine 128 contributes to the 1-deoxy-D-xylulose 5-phosphate binding site. Glutamate 129 contacts NADPH. Position 153 (aspartate 153) interacts with Mn(2+). 1-deoxy-D-xylulose 5-phosphate is bound by residues serine 154, glutamate 155, serine 179, and histidine 200. Residue glutamate 155 coordinates Mn(2+). Glycine 206 is a binding site for NADPH. Residues serine 213, asparagine 218, lysine 219, and glutamate 222 each contribute to the 1-deoxy-D-xylulose 5-phosphate site. A Mn(2+)-binding site is contributed by glutamate 222.

Belongs to the DXR family. Requires Mg(2+) as cofactor. Mn(2+) serves as cofactor.

The enzyme catalyses 2-C-methyl-D-erythritol 4-phosphate + NADP(+) = 1-deoxy-D-xylulose 5-phosphate + NADPH + H(+). It functions in the pathway isoprenoid biosynthesis; isopentenyl diphosphate biosynthesis via DXP pathway; isopentenyl diphosphate from 1-deoxy-D-xylulose 5-phosphate: step 1/6. Its function is as follows. Catalyzes the NADPH-dependent rearrangement and reduction of 1-deoxy-D-xylulose-5-phosphate (DXP) to 2-C-methyl-D-erythritol 4-phosphate (MEP). In Symbiobacterium thermophilum (strain DSM 24528 / JCM 14929 / IAM 14863 / T), this protein is 1-deoxy-D-xylulose 5-phosphate reductoisomerase.